Reading from the N-terminus, the 456-residue chain is UPF0496 protein 4 (456 aa).

A helical membrane pass occupies residues S205–S221.

It belongs to the ROH1 family.

Its subcellular location is the membrane. The chain is UPF0496 protein 4 from Oryza sativa subsp. indica (Rice).